The primary structure comprises 283 residues: Bifunctional protein FolD (283 aa).

NADP(+)-binding positions include 157-159 and I224; that span reads GNG.

The protein belongs to the tetrahydrofolate dehydrogenase/cyclohydrolase family. Homodimer.

It carries out the reaction (6R)-5,10-methylene-5,6,7,8-tetrahydrofolate + NADP(+) = (6R)-5,10-methenyltetrahydrofolate + NADPH. The enzyme catalyses (6R)-5,10-methenyltetrahydrofolate + H2O = (6R)-10-formyltetrahydrofolate + H(+). The protein operates within one-carbon metabolism; tetrahydrofolate interconversion. In terms of biological role, catalyzes the oxidation of 5,10-methylenetetrahydrofolate to 5,10-methenyltetrahydrofolate and then the hydrolysis of 5,10-methenyltetrahydrofolate to 10-formyltetrahydrofolate. The chain is Bifunctional protein FolD from Mycoplasmoides gallisepticum (strain R(low / passage 15 / clone 2)) (Mycoplasma gallisepticum).